Consider the following 274-residue polypeptide: 2-dehydro-3-deoxyphosphooctonate aldolase (274 aa).

Belongs to the KdsA family.

It is found in the cytoplasm. The catalysed reaction is D-arabinose 5-phosphate + phosphoenolpyruvate + H2O = 3-deoxy-alpha-D-manno-2-octulosonate-8-phosphate + phosphate. Its pathway is carbohydrate biosynthesis; 3-deoxy-D-manno-octulosonate biosynthesis; 3-deoxy-D-manno-octulosonate from D-ribulose 5-phosphate: step 2/3. The protein operates within bacterial outer membrane biogenesis; lipopolysaccharide biosynthesis. The protein is 2-dehydro-3-deoxyphosphooctonate aldolase of Rickettsia conorii (strain ATCC VR-613 / Malish 7).